The chain runs to 417 residues: Inner membrane transport protein YnfM (417 aa).

Residues M1–Q22 are disordered. The Periplasmic segment spans residues M1–T38. A helical transmembrane segment spans residues L39–L59. The Cytoplasmic portion of the chain corresponds to P60–S73. A helical membrane pass occupies residues S74–L94. At S95–K101 the chain is on the periplasmic side. The chain crosses the membrane as a helical span at residues P102 to T122. Over S123 to H125 the chain is Cytoplasmic. The helical transmembrane segment at G126–M146 threads the bilayer. The Periplasmic portion of the chain corresponds to T147–E152. Residues I153–G173 form a helical membrane-spanning segment. The Cytoplasmic segment spans residues M174–R190. A helical transmembrane segment spans residues I191–L211. Residues P212 to P241 are Periplasmic-facing. The helical transmembrane segment at L242–G262 threads the bilayer. The Cytoplasmic segment spans residues Y263–R264. The chain crosses the membrane as a helical span at residues L265–L285. The Periplasmic segment spans residues T286–L315. A helical transmembrane segment spans residues F316–F336. Over S337–S364 the chain is Cytoplasmic. Residues L365 to W385 form a helical membrane-spanning segment. The Periplasmic portion of the chain corresponds to H386–N387. A helical membrane pass occupies residues Y388–G408. At T409 to A417 the chain is on the cytoplasmic side.

This sequence belongs to the major facilitator superfamily.

The protein resides in the cell inner membrane. The sequence is that of Inner membrane transport protein YnfM (ynfM) from Escherichia coli (strain K12).